Reading from the N-terminus, the 315-residue chain is N-acetyl-D-glutamate racemase (315 aa).

Mg(2+) is bound by residues D147, E173, and D196.

The protein belongs to the mandelate racemase/muconate lactonizing enzyme family. It depends on Mg(2+) as a cofactor.

The enzyme catalyses N-acetyl-D-glutamate = N-acetyl-L-glutamate. It functions in the pathway amino-acid degradation. In terms of biological role, racemase involved in a deamination-independent D-glutamate degradation pathway, named the DgcN-DgcA pathway. Catalyzes the conversion of N-acetyl-D-glutamate to N-acetyl-L-glutamate. Also shows racemase activity towards the dipeptide L-Ala-D-Glu, a key constituent of peptidoglycan muropeptides, suggesting that it may also contribute to the degradation of peptidoglycans. The polypeptide is N-acetyl-D-glutamate racemase (Pseudoalteromonas sp).